Consider the following 803-residue polypeptide: MNSAEQTVTWLITLGVLESPKKTISDPEGFLQASLKDGVVLCRLLERLLPGTIEKVYPEPRSESECLSNIREFLRGCGASLRLELLFPPSQPPQHLVTTILLSASTFDANDLYQGQNFNKVLSSLVTLNKVTADIGLGSDSVCARPSSHRIKSFDSLGSQSLHTRTSKLFQGQYRSLDMTDNSNNQLVVRAKFNFQQTNEDELSFSKGDVIHVTRVEEGGWWEGTLNGRTGWFPSNYVREVKASEKPVSPKSGTLKSPPKGFDTTAINKSYYNVVLQNILETENEYSKELQTVLSTYLRPLQTSEKLSSANISYLMGNLEEICSFQQMLVQSLEECTKLPEAQQRVGGCFLNLMPQMKTLYLTYCANHPSAVNVLTEHSEELGEFMETKGASSPGILVLTTGLSKPFMRLDKYPTLLKELERHMEDYHTDRQDIQKSMAAFKNLSAQCQEVRKRKELELQILTEAIRNWEGDDIKTLGNVTYMSQVLIQCAGSEEKNERYLLLFPNVLLMLSASPRMSGFIYQGKLPTTGMTITKLEDSENHRNAFEISGSMIERILVSCNNQQDLQEWVEHLQKQTKVTSVGNPTIKPHSVPSHTLPSHPVTPSSKHADSKPAPLTPAYHTLPHPSHHGTPHTTINWGPLEPPKTPKPWSLSCLRPAPPLRPSAALCYKEDLSKSPKTMKKLLPKRKPERKPSDEEFASRKSTAALEEDAQILKVIEAYCTSAKTRQTLNSTWQGTDLMHNHVLADDDQPSLDSLGRRSSLSRLEPSDLSEDSDYDSIWTAHSYRMGSTSRKSCCSYISHQN.

Met-1 carries the post-translational modification N-acetylmethionine. The Calponin-homology (CH) domain occupies 1–133; that stretch reads MNSAEQTVTW…SLVTLNKVTA (133 aa). The residue at position 2 (Asn-2) is an N-acetylthreonine. Phosphoserine occurs at positions 153 and 176. The 60-residue stretch at 184-243 folds into the SH3 domain; it reads NNQLVVRAKFNFQQTNEDELSFSKGDVIHVTRVEEGGWWEGTLNGRTGWFPSNYVREVKA. Residues Ser-249 and Ser-257 each carry the phosphoserine modification. The DH domain maps to 271–451; sequence YYNVVLQNIL…KNLSAQCQEV (181 aa). Residues 473-578 enclose the PH domain; the sequence is DIKTLGNVTY…WVEHLQKQTK (106 aa). A phosphoserine mark is found at Ser-518, Cys-560, and Val-579. Residues 580–655 form a disordered region; the sequence is TSVGNPTIKP…TPKPWSLSCL (76 aa). The span at 593-606 shows a compositional bias: polar residues; that stretch reads PSHTLPSHPVTPSS. A phosphoserine mark is found at Lys-645 and Ser-664. Positions 678–690 are enriched in basic residues; the sequence is KTMKKLLPKRKPE. Disordered stretches follow at residues 678–704 and 748–773; these read KTMKKLLPKRKPERKPSDEEFASRKST and DDQPSLDSLGRRSSLSRLEPSDLSED. Basic and acidic residues predominate over residues 691–700; sequence RKPSDEEFAS. Ser-694 bears the Phosphoserine; by CaMK1 mark. The segment covering 752 to 765 has biased composition (low complexity); the sequence is SLDSLGRRSSLSRL.

As to quaternary structure, interacts with PAK kinases through the SH3 domain. Interacts with GIT1 and TGFB1I1. Interacts with PTK2/FAK1 and RAC1. Interacts with ITCH and PARVB. Interacts with unphosphorylated PAK1. Interacts with SCRIB; interaction is direct and may play a role in regulation of apoptosis. Interacts with FRMPD4 (via N-terminus). Interacts with CaMK1. Interacts with BIN2. Interacts with YWHAZ. Interacts (via PH domain) with NOX1 (via FAD-binding FR-type domain). Interacts with SNX27. In terms of processing, phosphorylated by PTK2/FAK1; this promotes interaction with RAC1. Phosphorylated on Ser-694 by CaMK1; enhancement of GEF activity and downstream activation of RAC1.

Its subcellular location is the cell junction. It is found in the focal adhesion. The protein resides in the cell projection. It localises to the ruffle. The protein localises to the cytoplasm. Its subcellular location is the cell cortex. It is found in the lamellipodium. Acts as a RAC1 guanine nucleotide exchange factor (GEF) and can induce membrane ruffling. Functions in cell migration, attachment and cell spreading. Promotes targeting of RAC1 to focal adhesions. May function as a positive regulator of apoptosis. Downstream of NMDA receptors and CaMKK-CaMK1 signaling cascade, promotes the formation of spines and synapses in hippocampal neurons. The protein is Rho guanine nucleotide exchange factor 7 (ARHGEF7) of Homo sapiens (Human).